We begin with the raw amino-acid sequence, 167 residues long: UPF0114 protein in repA1-repA2 intergenic region (167 aa).

A run of 3 helical transmembrane segments spans residues 15 to 35, 53 to 73, and 136 to 156; these read LMFP…LKFF, LVLV…LVMV, and IMLC…MAYI.

This sequence belongs to the UPF0114 family.

The protein localises to the cell membrane. The chain is UPF0114 protein in repA1-repA2 intergenic region from Buchnera aphidicola subsp. Diuraphis noxia.